A 715-amino-acid polypeptide reads, in one-letter code: Fatty acid oxidation complex subunit alpha (715 aa).

Residues 1–190 (MIYQGKAITV…KVGAVDAVVA (190 aa)) form an enoyl-CoA hydratase/isomerase region. Substrate is bound at residue aspartate 297. Residues 312 to 715 (KDVKLAAVLG…MAKNGQKFFG (404 aa)) are 3-hydroxyacyl-CoA dehydrogenase. NAD(+) is bound by residues methionine 325, aspartate 344, 401–403 (VVE), lysine 408, and serine 430. Histidine 451 functions as the For 3-hydroxyacyl-CoA dehydrogenase activity in the catalytic mechanism. Asparagine 454 serves as a coordination point for NAD(+). Substrate-binding residues include asparagine 501 and tyrosine 660.

The protein in the N-terminal section; belongs to the enoyl-CoA hydratase/isomerase family. This sequence in the C-terminal section; belongs to the 3-hydroxyacyl-CoA dehydrogenase family. In terms of assembly, heterotetramer of two alpha chains (FadB) and two beta chains (FadA).

It carries out the reaction a (3S)-3-hydroxyacyl-CoA + NAD(+) = a 3-oxoacyl-CoA + NADH + H(+). The enzyme catalyses a (3S)-3-hydroxyacyl-CoA = a (2E)-enoyl-CoA + H2O. It catalyses the reaction a 4-saturated-(3S)-3-hydroxyacyl-CoA = a (3E)-enoyl-CoA + H2O. The catalysed reaction is (3S)-3-hydroxybutanoyl-CoA = (3R)-3-hydroxybutanoyl-CoA. It carries out the reaction a (3Z)-enoyl-CoA = a 4-saturated (2E)-enoyl-CoA. The enzyme catalyses a (3E)-enoyl-CoA = a 4-saturated (2E)-enoyl-CoA. Its pathway is lipid metabolism; fatty acid beta-oxidation. Functionally, involved in the aerobic and anaerobic degradation of long-chain fatty acids via beta-oxidation cycle. Catalyzes the formation of 3-oxoacyl-CoA from enoyl-CoA via L-3-hydroxyacyl-CoA. It can also use D-3-hydroxyacyl-CoA and cis-3-enoyl-CoA as substrate. The protein is Fatty acid oxidation complex subunit alpha of Pseudomonas aeruginosa (strain LESB58).